The sequence spans 316 residues: 4-hydroxy-3-methylbut-2-enyl diphosphate reductase (316 aa).

Cys-12 is a [4Fe-4S] cluster binding site. The (2E)-4-hydroxy-3-methylbut-2-enyl diphosphate site is built by His-41 and His-74. Dimethylallyl diphosphate contacts are provided by His-41 and His-74. Isopentenyl diphosphate is bound by residues His-41 and His-74. Cys-96 lines the [4Fe-4S] cluster pocket. His-124 contacts (2E)-4-hydroxy-3-methylbut-2-enyl diphosphate. His-124 provides a ligand contact to dimethylallyl diphosphate. His-124 is an isopentenyl diphosphate binding site. Glu-126 acts as the Proton donor in catalysis. Residue Thr-168 participates in (2E)-4-hydroxy-3-methylbut-2-enyl diphosphate binding. Cys-198 contributes to the [4Fe-4S] cluster binding site. (2E)-4-hydroxy-3-methylbut-2-enyl diphosphate is bound by residues Ser-226, Ser-227, Asn-228, and Ser-270. Residues Ser-226, Ser-227, Asn-228, and Ser-270 each coordinate dimethylallyl diphosphate. Positions 226, 227, 228, and 270 each coordinate isopentenyl diphosphate.

The protein belongs to the IspH family. The cofactor is [4Fe-4S] cluster.

The enzyme catalyses isopentenyl diphosphate + 2 oxidized [2Fe-2S]-[ferredoxin] + H2O = (2E)-4-hydroxy-3-methylbut-2-enyl diphosphate + 2 reduced [2Fe-2S]-[ferredoxin] + 2 H(+). It carries out the reaction dimethylallyl diphosphate + 2 oxidized [2Fe-2S]-[ferredoxin] + H2O = (2E)-4-hydroxy-3-methylbut-2-enyl diphosphate + 2 reduced [2Fe-2S]-[ferredoxin] + 2 H(+). The protein operates within isoprenoid biosynthesis; dimethylallyl diphosphate biosynthesis; dimethylallyl diphosphate from (2E)-4-hydroxy-3-methylbutenyl diphosphate: step 1/1. It functions in the pathway isoprenoid biosynthesis; isopentenyl diphosphate biosynthesis via DXP pathway; isopentenyl diphosphate from 1-deoxy-D-xylulose 5-phosphate: step 6/6. In terms of biological role, catalyzes the conversion of 1-hydroxy-2-methyl-2-(E)-butenyl 4-diphosphate (HMBPP) into a mixture of isopentenyl diphosphate (IPP) and dimethylallyl diphosphate (DMAPP). Acts in the terminal step of the DOXP/MEP pathway for isoprenoid precursor biosynthesis. This Acinetobacter baylyi (strain ATCC 33305 / BD413 / ADP1) protein is 4-hydroxy-3-methylbut-2-enyl diphosphate reductase.